We begin with the raw amino-acid sequence, 184 residues long: ATP-dependent protease subunit HslV (184 aa).

Residue threonine 12 is part of the active site. Na(+)-binding residues include alanine 166, cysteine 169, and threonine 172.

Belongs to the peptidase T1B family. HslV subfamily. In terms of assembly, a double ring-shaped homohexamer of HslV is capped on each side by a ring-shaped HslU homohexamer. The assembly of the HslU/HslV complex is dependent on binding of ATP.

It is found in the cytoplasm. It catalyses the reaction ATP-dependent cleavage of peptide bonds with broad specificity.. Allosterically activated by HslU binding. In terms of biological role, protease subunit of a proteasome-like degradation complex believed to be a general protein degrading machinery. The polypeptide is ATP-dependent protease subunit HslV (Brucella anthropi (strain ATCC 49188 / DSM 6882 / CCUG 24695 / JCM 21032 / LMG 3331 / NBRC 15819 / NCTC 12168 / Alc 37) (Ochrobactrum anthropi)).